We begin with the raw amino-acid sequence, 100 residues long: Small ribosomal subunit protein bS18c (100 aa).

This sequence belongs to the bacterial ribosomal protein bS18 family. As to quaternary structure, part of the 30S ribosomal subunit.

The protein resides in the plastid. The protein localises to the chloroplast. The polypeptide is Small ribosomal subunit protein bS18c (Pleurastrum terricola (Filamentous green alga)).